A 693-amino-acid chain; its full sequence is ATP-dependent DNA helicase RecG (693 aa).

Residues 48–146 are wedge domain; it reads THLYPIGELL…GDLSTPELQE (99 aa). The region spanning 283-448 is the Helicase ATP-binding domain; sequence DMALDVPMMR…AYADLDTSVI (166 aa). 296-303 is an ATP binding site; that stretch reads GDVGSGKT. The short motif at 397-400 is the DEAH box element; it reads DEQH. The Helicase C-terminal domain occupies 482-628; the sequence is EGRQAYWVCT…GFVIAQKDLE (147 aa).

Belongs to the helicase family. RecG subfamily. Monomer in solution. Probably a monomer on HJ DNA. Binding to fork DNA is facilitated by SSB; the proteins do not seem to stably associate. It depends on Mg(2+) as a cofactor.

It carries out the reaction Couples ATP hydrolysis with the unwinding of duplex DNA by translocating in the 3'-5' direction.. The enzyme catalyses ATP + H2O = ADP + phosphate + H(+). Functionally, plays a critical role in recombination and DNA repair. Helps process Holliday junction (HJ) intermediates to mature products by catalyzing branch migration. Has replication fork regression activity, unwinds stalled or blocked replication forks to make a HJ that can be resolved by RuvC or RusA. Also rewinds unwound dsDNA in an ATP-dependent manner. Has double-stranded (ds)DNA unwinding activity characteristic of a DNA helicase with 3'-5' polarity in vitro on linear dsDNA; branched duplex DNA (Y-DNA) substrates adopt different conformations that influence which of the two arms are unwound. Binds and unwinds HJ and Y-DNA but not linear duplex DNA; binds no more than 10 nucleotides of ssDNA at a fork. Has a role in constitutive stable DNA replication (cSDR, DNA replication in the absence of protein synthesis) and R-loop (RNA annealed with dsDNA) formation. Unwinds R-loops but not RNA:DNA hybrids. Is genetically synergistic to RadA and RuvABC. This chain is ATP-dependent DNA helicase RecG, found in Escherichia coli (strain K12).